The sequence spans 407 residues: MRGVVKELNDDGFGVLGNVLVPFSAPGDEVEILKIEKVKKAKIASKWKLIKSSPLRVGARCKVFGRCGGCSLQHLSYDYQLEFKGERIRRLLGVDVEVIPSPRIFGHRNRIDLAVTVEGIGFRERGKWWKIVDIQECPVFGKTSRKAIERLREFIEEERISVWNVKKDEGFLRYMVLREGKFTGEVMVNLVTKEGKLPDPSKYFDFATSIYWSVNRTKSDVSYGEVESVWGREFITEKLDDVIYLIHPNSFFQTNSYQAVNLVKKVSELVEGERVLDMYSGVGTFGIYLAKRGFKVVGFDSNEFAIEMARKNAKINKVDAVFDVATDREVEVNGFDTVIVDPPRVGLHPKLIKKLNREKPEVIVYVSCNPKTFARDIEKLEYKIDEIVALDMFPHTPHLELVAKLIV.

4 residues coordinate [4Fe-4S] cluster: cysteine 61, cysteine 67, cysteine 70, and cysteine 137. Residues glutamine 253, tyrosine 279, threonine 284, 300-301 (DS), aspartate 327, and aspartate 341 each bind S-adenosyl-L-methionine. The active-site Nucleophile is the cysteine 368. The Proton acceptor role is filled by glutamate 400.

It belongs to the class I-like SAM-binding methyltransferase superfamily. RNA M5U methyltransferase family.

It catalyses the reaction uridine(54) in tRNA + S-adenosyl-L-methionine = 5-methyluridine(54) in tRNA + S-adenosyl-L-homocysteine + H(+). Its function is as follows. Catalyzes the formation of 5-methyl-uridine at position 54 (m5U54) in tRNA. The sequence is that of tRNA (uracil(54)-C(5))-methyltransferase from Pyrococcus horikoshii (strain ATCC 700860 / DSM 12428 / JCM 9974 / NBRC 100139 / OT-3).